A 205-amino-acid chain; its full sequence is Golgi to ER traffic protein 1 (205 aa).

The Lumenal segment spans residues 1 to 3 (MDY). The helical transmembrane segment at 4 to 24 (WILLVLAFLVADKSWHLTGLL) threads the bilayer. Over 25–96 (ATKLTSPERL…ATKARLAKLK (72 aa)) the chain is Cytoplasmic. Residues 32–96 (ERLQQLIRER…ATKARLAKLK (65 aa)) adopt a coiled-coil conformation. A helical transmembrane segment spans residues 97 to 117 (LLVVTVPFTALKFYKGKLPVY). Over 118 to 156 (ALPKGMFPRFIEGTLEHGWLYMALAPLNMKQFSEGASVA) the chain is Lumenal. A helical transmembrane segment spans residues 157-173 (VSLGIWLFALLRVLGAI). Residues 174–205 (EFVLETLREQNPQVATETAKVHARTAQAASAN) are Cytoplasmic-facing.

Belongs to the WRB/GET1 family. As to quaternary structure, component of the Golgi to ER traffic (GET) complex, which is composed of GET1, GET2 and GET3. Within the complex, GET1 and GET2 form a heterotetramer which is stabilized by phosphatidylinositol binding and which binds to the GET3 homodimer.

It is found in the endoplasmic reticulum membrane. The protein resides in the golgi apparatus membrane. Required for the post-translational delivery of tail-anchored (TA) proteins to the endoplasmic reticulum. Together with GET2, acts as a membrane receptor for soluble GET3, which recognizes and selectively binds the transmembrane domain of TA proteins in the cytosol. The GET complex cooperates with the HDEL receptor ERD2 to mediate the ATP-dependent retrieval of resident ER proteins that contain a C-terminal H-D-E-L retention signal from the Golgi to the ER. The protein is Golgi to ER traffic protein 1 of Eremothecium gossypii (strain ATCC 10895 / CBS 109.51 / FGSC 9923 / NRRL Y-1056) (Yeast).